The following is a 496-amino-acid chain: Ankyrin repeat domain-containing protein 53 (496 aa).

Low complexity predominate over residues 1-15 (MASAGSTARRAGSGS). Residues 1-66 (MASAGSTARR…RPSEESDQTT (66 aa)) are disordered. Residues 51 to 60 (AESKQPRPSE) show a composition bias toward basic and acidic residues. 3 ANK repeats span residues 105 to 135 (KGFTAIHFAAQRGKLACLQVLVEEYKFPVNL), 139 to 172 (NSQTPLHLVIHKDNTTVALPCIYYLLEKGAALNA), and 176 to 205 (NGCTPLHLAVREGLLDCVKVLVQSGANVHA). The disordered stretch occupies residues 292-320 (LVSNTKQARATALSKTPEQRGSQCSSSFH).

Interacts with PSRC1; recruited by PSRC1 to the spindle during mitosis. Post-translationally, phosphorylated during mitosis.

It is found in the cytoplasm. The protein resides in the cytoskeleton. Its subcellular location is the spindle. It localises to the spindle pole. Functionally, required for normal progression through mitosis. Involved in chromosome alignment and cytokinesis via regulation of microtubules polymerization. The protein is Ankyrin repeat domain-containing protein 53 (ANKRD53) of Macaca fascicularis (Crab-eating macaque).